Here is a 558-residue protein sequence, read N- to C-terminus: MELLSLGSRQRPSLHEIGLSIISLTTCFVCAFAVSFVALAIYRAHLHPLAAIPGPKLAALSSAWQAYHARNGRMLVLGKTLHAVYGPIVRVGPNEVWLNSPDAFRSIYGAGNGYEKSDFYLSTVLNKPAIDWGLNLHFPDTLDLLSEFDTRRYRLQRRLVGPVYQANNIKKFQNAVDDVIERAVAQLRTLDGAEVDLKEWMHIIVVECLGAVVLSWSPGYIAAETDGGTGTQSYLGWKRKSVFGLFPLVTTATFFSKGLGRLFSNLWGVTFPTPKNFKPFFTPVYHKSSKRINVALRQNAGSNTRPKPPKRKQDTQPNDLLTDLIQLHKAKAEFTEQYLRRMAITNFGAGHETMCSALTSIMAMVGSHPAVQGRIIDELGSHGYLPSTCTSKDQKPIAGQTHIDYDAAASLTYCLAAIKEAQRLYPVIGMSLSRKVPASGLSVHDVYIPPGTTVGCSPVSLHRNTTIFGDDASCFNPERWLQDNVEARRAMERYNLTWGGGGRTCPGRHLAEMVVWKVVPALLREFEVVVTKMPNDVEVEYYFMAMLTGVRARFIPRR.

The chain crosses the membrane as a helical span at residues 21 to 41 (IISLTTCFVCAFAVSFVALAI). Residues 298-317 (QNAGSNTRPKPPKRKQDTQP) form a disordered region. 2 N-linked (GlcNAc...) asparagine glycosylation sites follow: Asn-464 and Asn-495. Cys-505 is a heme binding site.

The protein belongs to the cytochrome P450 family. Heme serves as cofactor.

It localises to the membrane. Its pathway is antibiotic biosynthesis. Its function is as follows. Cytochrome P450 monooxygenase; part of the gene cluster that mediates the biosynthesis of sordarin and hypoxysordarin, glycoside antibiotics with a unique tetracyclic diterpene aglycone structure. First, the geranylgeranyl diphosphate synthase sdnC constructs GGDP from farnesyl diphosphate and isopentenyl diphosphate. The diterpene cyclase sdnA then catalyzes the cyclization of GGDP to afford cycloaraneosene. Cycloaraneosene is then hydroxylated four times by the putative cytochrome P450 monooxygenases sdnB, sdnE, sdnF and sdnH to give a hydroxylated cycloaraneosene derivative such as cycloaraneosene-8,9,13,19-tetraol. Although the order of the hydroxylations is unclear, at least C8, C9 and C13 of the cycloaraneosene skeleton are hydroxylated before the sordaricin formation. Dehydration of the 13-hydroxy group of the hydroxylated cycloaraneosene derivative might be catalyzed by an unassigned hypothetical protein such as sdnG and sdnP to construct the cyclopentadiene moiety. The FAD-dependent oxidoreductase sdnN is proposed to catalyze the oxidation at C9 of the hydroxylated cycloaraneosene derivative and also catalyze the Baeyer-Villiger oxidation to give the lactone intermediate. The presumed lactone intermediate would be hydrolyzed to give an acrolein moiety and a carboxylate moiety. Then, [4+2]cycloaddition would occur between the acrolein moiety and the cyclopentadiene moiety to give sordaricin. SdnN might also be involved in the [4+2]cycloaddition after the hypothesized oxidation to accommodate the oxidized product and prompt the [4+2]cycloaddition. GDP-6-deoxy-D-altrose may be biosynthesized from GDP-D-mannose by the putative GDP-mannose-4,6-dehydratase sdnI and the short-chain dehydrogenase sdnK. The glycosyltransferase sdnJ catalyzes the attachment of 6-deoxy-D-altrose onto the 19-hydroxy group of sordaricin to give 4'-O-demethylsordarin. The methyltransferase sdnD would complete the biosynthesis of sordarin. Sordarin can be further modified into hypoxysordarin. The unique acyl chain at the 3'-hydroxy group of hypoxysordarin would be constructed by an iterative type I PKS sdnO and the trans-acting polyketide methyltransferase sdnL. SdnL would be responsible for the introduction of an alpha-methyl group of the polyketide chain. Alternatively, the beta-lactamase-like protein sdnR might be responsible for the cleavage and transfer of the polyketide chain from the PKS sdnO to sordarin. Two putative cytochrome P450 monooxygenases, sdnQ and sdnT, might catalyze the epoxidations of the polyketide chain to complete the biosynthesis of hypoxysordarin. Transcriptional regulators sdnM and sdnS are presumably encoded for the transcriptional regulation of the expression of the sdn gene cluster. In Sordaria araneosa (Pleurage araneosa), this protein is Cytochrome P450 monooxygenase sdnT.